Here is an 82-residue protein sequence, read N- to C-terminus: CLAVATA3/ESR (CLE)-related protein 53 (82 aa).

The signal sequence occupies residues 1–26 (MATSTNSREFLIFICVLTLLVVRSEA). Hydroxyproline occurs at positions 74 and 77. O-linked (Ara...) hydroxyproline glycosylation occurs at Pro-77.

This sequence belongs to the CLV3/ESR signal peptide family. The O-glycosylation (arabinosylation) of the hydroxyproline Pro-77 enhances binding affinity of the CLE53p peptide for its receptor. Expressed in root vasculature.

Its subcellular location is the secreted. It is found in the extracellular space. Signaling peptide involved in the regulation of root colonization by arbuscular mycorrhizal (AM) fungi. Moves from root to shoot to function with the receptor kinase SUNN, in a signaling pathway that repress strigolactone biosynthetic genes and strigolactone content in the roots, and consequently reduces the promotion of further colonization by AM fungi. The protein is CLAVATA3/ESR (CLE)-related protein 53 of Medicago truncatula (Barrel medic).